Reading from the N-terminus, the 1279-residue chain is Botulinum-like toxin eBoNT/J (1279 aa).

H225 provides a ligand contact to Zn(2+). Residue E226 is part of the active site. 2 residues coordinate Zn(2+): H229 and E269. The cysteines at positions 424 and 438 are disulfide-linked. Positions 435-843 (LSSCIEILED…RLTSLPVFNL (409 aa)) are translocation domain (TD). The interval 476 to 525 (ADTILDSTLSNYDFSKEINFTSTVPIITVEDPLETDEDVPVISEDRTVYV) is belt; not required for channel formation. The interval 860–1080 (IDIQDSEVLN…EVNRLYWKYF (221 aa)) is N-terminus of receptor binding domain (N-RBD). A C-terminus of receptor binding domain (C-RBD) region spans residues 1081–1279 (EGSYLRDVWG…IPVDEGWKED (199 aa)). Residues 1250 to 1253 (SAWY) carry the Host ganglioside-binding motif motif.

Belongs to the peptidase M27 family. As to quaternary structure, might be a disulfide-linked heterodimer of a light chain (LC) and heavy chain (HC). Zn(2+) serves as cofactor.

Its subcellular location is the secreted. The protein localises to the host cytoplasm. It is found in the host cytosol. The protein resides in the host cell membrane. It localises to the host cytoplasmic vesicle membrane. The catalysed reaction is Limited hydrolysis of proteins of the neuroexocytosis apparatus, synaptobrevins, SNAP25 or syntaxin. No detected action on small molecule substrates.. Functionally, strongly resembles a botulinum-type toxin, with the appropriate domains and residues to have proteolytic function, although its C-terminus (which binds to a eukaryotic host cell) is different enough from clostrial botulinum toxins that it might bind another cell target. Might be a precursor of a toxin that binds to an unknown eukaryotic cell receptor(s), and be taken up into the host cell via the endocytic pathway. When the pH of the putative toxin-containing endosome drops a structural rearrangement occurs so that the N-terminus of the heavy chain forms pores that allows the light chain to translocate into the cytosol. Once in the cytosol the disulfide bond linking the 2 subunits is reduced and light chain cleaves its target protein. The polypeptide is Botulinum-like toxin eBoNT/J (Enterococcus sp. (strain 3G1_DIV0629)).